The chain runs to 182 residues: Mu-like prophage FluMu protein gp45 (182 aa).

The interval 159–182 (TDHQSSGISGKNHDHEERVGKPVP) is disordered. Residues 169–182 (KNHDHEERVGKPVP) show a composition bias toward basic and acidic residues.

It to phage Mu protein gp45.

The chain is Mu-like prophage FluMu protein gp45 from Haemophilus influenzae (strain ATCC 51907 / DSM 11121 / KW20 / Rd).